The primary structure comprises 292 residues: 5,10-methylenetetrahydrofolate reductase (292 aa).

The active-site Proton donor/acceptor is glutamate 28. Position 59 (threonine 59) interacts with NADH. FAD is bound by residues tyrosine 60, alanine 62, histidine 88, arginine 118, glycine 119, aspartate 120, alanine 132, tyrosine 152, histidine 156, aspartate 165, asparagine 168, lysine 171, and lysine 172. (6S)-5-methyl-5,6,7,8-tetrahydrofolate is bound at residue aspartate 120. Glutamine 183 is an NADH binding site. Glutamine 183 serves as a coordination point for (6S)-5-methyl-5,6,7,8-tetrahydrofolate.

It belongs to the methylenetetrahydrofolate reductase family. FAD is required as a cofactor.

The catalysed reaction is (6S)-5-methyl-5,6,7,8-tetrahydrofolate + NAD(+) = (6R)-5,10-methylene-5,6,7,8-tetrahydrofolate + NADH + H(+). Its pathway is one-carbon metabolism; tetrahydrofolate interconversion. The protein operates within amino-acid biosynthesis; L-methionine biosynthesis via de novo pathway. Catalyzes the NADH-dependent reduction of 5,10-methylenetetrahydrofolate to 5-methyltetrahydrofolate. Is required to provide the methyl group necessary for methionine synthetase to convert homocysteine to methionine; the methyl group is given by 5-methyltetrahydrofolate. In Buchnera aphidicola subsp. Acyrthosiphon pisum (strain APS) (Acyrthosiphon pisum symbiotic bacterium), this protein is 5,10-methylenetetrahydrofolate reductase (metF).